The primary structure comprises 152 residues: MKTPIEVKILDPRIGTQFPLPAYATPGSAGMDLRAMVDTELTLAPGETKLIPTGIAIHVADPSLAAVILPRSGLGHKHGIVLGNLVGLIDSDYQGPLMVSCWNRSDTPFTLTLGERLAQLVFVPVVQAQFTLVDEFERSDRGEGGFGHSGTQ.

Substrate is bound by residues 71–73 (RSG), N84, 88–90 (LID), and M98.

It belongs to the dUTPase family. Mg(2+) is required as a cofactor.

The enzyme catalyses dUTP + H2O = dUMP + diphosphate + H(+). Its pathway is pyrimidine metabolism; dUMP biosynthesis; dUMP from dCTP (dUTP route): step 2/2. Functionally, this enzyme is involved in nucleotide metabolism: it produces dUMP, the immediate precursor of thymidine nucleotides and it decreases the intracellular concentration of dUTP so that uracil cannot be incorporated into DNA. This Shewanella denitrificans (strain OS217 / ATCC BAA-1090 / DSM 15013) protein is Deoxyuridine 5'-triphosphate nucleotidohydrolase.